The following is a 221-amino-acid chain: Oxaloacetate tautomerase oaa1, mitochondrial (221 aa).

3 residues coordinate Mg(2+): E59, E61, and D93.

This sequence belongs to the FAH family. Mg(2+) serves as cofactor. Requires Mn(2+) as cofactor.

The protein resides in the mitochondrion. Its subcellular location is the cytoplasm. The enzyme catalyses oxaloacetate = enol-oxaloacetate. Tautomerase that converts enol-oxaloacetate, a strong inhibitor of succinate dehydrogenase, to the physiological keto form of oxaloacetate. This Schizosaccharomyces pombe (strain 972 / ATCC 24843) (Fission yeast) protein is Oxaloacetate tautomerase oaa1, mitochondrial.